A 309-amino-acid polypeptide reads, in one-letter code: Cilia-and flagella-associated protein 96 (309 aa).

The interval 220-249 is disordered; that stretch reads EEKKKTISNTFKPSSPGKKPGGMKAGTFDP.

Belongs to the CFAP96 family. Detected in testis and fetal liver.

Its subcellular location is the cytoplasm. It localises to the cytoskeleton. It is found in the microtubule organizing center. The protein localises to the centrosome. This chain is Cilia-and flagella-associated protein 96, found in Homo sapiens (Human).